The primary structure comprises 684 residues: Fidgetin-like protein 2 (684 aa).

Polar residues predominate over residues 27 to 41 (PEQHLDVSSTTSSPA). Disordered stretches follow at residues 27–48 (PEQH…ELYS), 99–179 (PGAF…PHSS), and 292–403 (LDEE…SDPM). Residues 160 to 179 (SNLSDSGYSGSSSCSGPHSS) are compositionally biased toward low complexity. Position 431 (alanine 431) interacts with ATP.

The protein belongs to the AAA ATPase family. It depends on Mg(2+) as a cofactor. In terms of tissue distribution, highly expressed in vascular endothelial cells and neuronal cells.

The protein resides in the cytoplasm. It is found in the cell cortex. It carries out the reaction ATP + H2O = ADP + phosphate + H(+). Microtubule-severing enzyme that negatively regulates cell migration and wound healing. In migrating cells, targets dynamic microtubules (MTs) at the leading edge and severs them, thereby suppressing motility. Negative regulator of axon regeneration that suppresses axonal growth by selectively severing dynamic MTs in the distal axon shaft and growth cone. Contributes to proper cell branching during endothelial and neuronal development. This chain is Fidgetin-like protein 2 (fignl2), found in Danio rerio (Zebrafish).